The primary structure comprises 259 residues: Heat-labile enterotoxin IIA, A chain (259 aa).

The signal sequence occupies residues 1 to 18; it reads MIKHVLLFFVFISFSVSA. 23–37 contributes to the NAD(+) binding site; that stretch reads RADSRTPDEIRRAGG. Residue Glu-128 is part of the active site. A disulfide bridge links Cys-203 with Cys-215.

This sequence belongs to the enterotoxin A family. Heterohexamer of one A chain and of five B chains.

In terms of biological role, the biological activity of the toxin is produced by the A chain, which activates intracellular adenyl cyclase. The protein is Heat-labile enterotoxin IIA, A chain of Escherichia coli.